Reading from the N-terminus, the 128-residue chain is T-cell leukemia/lymphoma protein 1B (128 aa).

This sequence belongs to the TCL1 family. Interacts with AKT1 and AKT2 (via PH domain). Does not interact with AKT3. As to expression, expressed in a variety of tissues including placenta and testis.

Functionally, enhances the phosphorylation and activation of AKT1 and AKT2. This chain is T-cell leukemia/lymphoma protein 1B (TCL1B), found in Homo sapiens (Human).